A 272-amino-acid polypeptide reads, in one-letter code: Rhomboid-type serine protease B (272 aa).

The next 5 helical transmembrane spans lie at 30 to 50 (IVLL…WSVV), 72 to 92 (PFIH…TPLL), 103 to 123 (TAVA…YILV), 133 to 153 (AVVG…IKTF), and 164 to 184 (TKIP…IFVP). The active-site Nucleophile is Ser-138. An N-linked (GlcNAc...) asparagine glycan is attached at Asn-185. Residues 186–206 (TSFLGHLSAIIIGYLLGLGYL) traverse the membrane as a helical segment. His-191 is an active-site residue.

Belongs to the peptidase S54 family.

Its subcellular location is the membrane. It carries out the reaction Cleaves type-1 transmembrane domains using a catalytic dyad composed of serine and histidine that are contributed by different transmembrane domains.. Functionally, rhomboid protease that catalyzes intramembrane proteolysis. Required for transcription factor srbA activation by mediating its release from the membrane and thereby regulating its activity under hypoxic conditions. Essential for iron homeostasis and resistance to azoles such as voriconazole. Required for virulence in murine models of invasive pulmonary aspergillosis (IPA). This chain is Rhomboid-type serine protease B, found in Aspergillus fumigatus (strain CBS 144.89 / FGSC A1163 / CEA10) (Neosartorya fumigata).